Here is a 601-residue protein sequence, read N- to C-terminus: Arginine--tRNA ligase (601 aa).

Residues Pro133 to His143 carry the 'HIGH' region motif.

Belongs to the class-I aminoacyl-tRNA synthetase family. In terms of assembly, monomer.

It localises to the cytoplasm. The catalysed reaction is tRNA(Arg) + L-arginine + ATP = L-arginyl-tRNA(Arg) + AMP + diphosphate. The sequence is that of Arginine--tRNA ligase from Flavobacterium psychrophilum (strain ATCC 49511 / DSM 21280 / CIP 103535 / JIP02/86).